A 259-amino-acid chain; its full sequence is Indole-diterpene biosynthesis cluster protein S (259 aa).

The next 5 membrane-spanning stretches (helical) occupy residues 5–25, 64–84, 87–107, 134–154, and 221–241; these read EASG…GMVW, WFAL…AIIL, VYLI…LWVL, VLWF…AASF, and LGAG…PAAG.

This sequence belongs to the ltmS family.

It is found in the membrane. Part of the gene cluster that mediates the biosynthesis of paspalitrems, indole-diterpene (IDT) mycotoxins that are potent tremorgens in mammals. The geranylgeranyl diphosphate (GGPP) synthase idtG is proposed to catalyze the first step in IDT biosynthesis via catalysis of a series of iterative condensations of isopentenyl diphosphate (IPP) with dimethylallyl diphosphate (DMAPP), geranyl diphosphate (GPP), and farnesyl diphosphate (FPP), to form GGPP. Condensation of indole-3-glycerol phosphate with GGPP by the prenyltransferase idtC then forms 3-geranylgeranylindole (3-GGI). Epoxidation of the two terminal alkenes of the geranylgeranyl moiety by the FAD-dependent monooxygenase idtM, and cyclization by the terpene cyclase idtB then leads to the production of paspaline. The cytochrome P450 monooxygenase idtP then catalyzes oxidative elimination of the pendant methyl group at C-12 of paspaline and generates the C-10 ketone to yield 13-desoxypaxilline. The cytochrome P450 monooxygenase idtQ may catalyze the C-13 oxidation of 13-desoxypaxilline to afford paxilline. Considering that both paspalicine and paxilline were detected in C.paspali, idtQ also catalyzes the formation of paspalinine from 13-desoxypaxilline via paspalicine as an intermediate. Finally, the alpha-prenyltransferase idtF prenylates paspalinine at the C-20 or the C-21 positions to yield paspalitrems A and C, respectively. The hydroxylation of paspalitrem A at C-32 by a still unknown oxidase affords paspalitrem B. This Claviceps paspali (Rye ergot fungus) protein is Indole-diterpene biosynthesis cluster protein S.